Here is a 315-residue protein sequence, read N- to C-terminus: HTH-type transcriptional regulator TreR (315 aa).

Positions 5–59 constitute an HTH lacI-type domain; it reads LTIKDIARLSGVGKSTVSRVLNNESGVSERTRERVEAVMNQHGFSPSRSARAMRG. The H-T-H motif DNA-binding region spans 7 to 26; it reads IKDIARLSGVGKSTVSRVLN. Alpha,alpha-trehalose 6-phosphate-binding positions include 71 to 77, Gly-126, Arg-147, 187 to 190, Arg-194, Thr-242, and Tyr-284; these read RLDSLSE and DITT.

Homodimer.

Repressor of the treBC operon. It is able to bind trehalose-6-phosphate. In Salmonella typhimurium (strain LT2 / SGSC1412 / ATCC 700720), this protein is HTH-type transcriptional regulator TreR (treR).